Here is a 198-residue protein sequence, read N- to C-terminus: Recombination protein RecR (198 aa).

The C4-type zinc finger occupies 57 to 72 (CEKCNTFTEAQICEVC). The region spanning 80 to 175 (TLLCVVETPA…AVTRLARGVP (96 aa)) is the Toprim domain.

It belongs to the RecR family.

Functionally, may play a role in DNA repair. It seems to be involved in an RecBC-independent recombinational process of DNA repair. It may act with RecF and RecO. The chain is Recombination protein RecR from Paraburkholderia xenovorans (strain LB400).